The primary structure comprises 590 residues: Myo-inositol transporter 3A (590 aa).

Over 1–57 (MSATHIENRDDSFLENKGIDHIGRPENNNGSQEPPSPSGFGGHLIDENLVRVEGEDK) the chain is Cytoplasmic. The segment covering 15 to 24 (ENKGIDHIGR) has biased composition (basic and acidic residues). A disordered region spans residues 15–40 (ENKGIDHIGRPENNNGSQEPPSPSGF). The helical transmembrane segment at 58-78 (VTWYLCFLISASAIAGFLFGY) threads the bilayer. Residues 79–105 (DTGVVGVALPLVGTDLGGSALNSSQQE) lie on the Extracellular side of the membrane. An N-linked (GlcNAc...) asparagine glycan is attached at asparagine 100. Residues 106-126 (IITAGTTIGAIFGSAILGGWG) form a helical membrane-spanning segment. Residues 127–132 (DRLGRK) are Cytoplasmic-facing. A helical transmembrane segment spans residues 133–153 (GAILVSDVFFTIGAVIIASSY). Residues 154-157 (SVPQ) lie on the Extracellular side of the membrane. Residues 158-178 (IIVGRIILGIGVGGAAVIAPL) form a helical membrane-spanning segment. At 179-192 (FITETAPTAVRGRC) the chain is on the cytoplasmic side. The helical transmembrane segment at 193–213 (IGVNAFFIPFGQVVSDAIGAG) threads the bilayer. Over 214–222 (VQNMHNGWR) the chain is Extracellular. The chain crosses the membrane as a helical span at residues 223–243 (LLFALGAVPSLLQLLLFHYLP). The Cytoplasmic portion of the chain corresponds to 244-325 (ESPRILILKG…AVSALQAAGQ (82 aa)). Residues 326–346 (LTGFNTLLYYAGTLFGLLGLS) form a helical membrane-spanning segment. At 347–349 (NPA) the chain is on the extracellular side. Residues 350–370 (LGGLIPAGTNAVFVLIGMSLV) traverse the membrane as a helical segment. The Cytoplasmic segment spans residues 371–376 (DKVGRR). Residues 377 to 397 (GLLLIGVPIMLLGHVWNIVSF) form a helical membrane-spanning segment. Residues 398–420 (YYMCKPTGGFLDTSYSYDTTDVG) lie on the Extracellular side of the membrane. Residues 421–441 (IVIGGIVFFVVGYGLTYSHLV) form a helical membrane-spanning segment. Over 442-455 (WYQAEYLTLEVRSM) the chain is Cytoplasmic. Residues 456-476 (GSGIATTVCWIANLVVSVSYL) traverse the membrane as a helical segment. Over 477 to 485 (SELETMTPS) the chain is Extracellular. A helical membrane pass occupies residues 486-506 (GTYGFYFGISVIGFVFLVFCL). Residues 507 to 590 (PETKQLSIDE…GGKRTPSASV (84 aa)) lie on the Cytoplasmic side of the membrane.

This sequence belongs to the major facilitator superfamily. Sugar transporter (TC 2.A.1.1) family.

The protein localises to the cell membrane. The enzyme catalyses myo-inositol(out) + H(+)(out) = myo-inositol(in) + H(+)(in). In terms of biological role, transporter for myo-inositol. The sequence is that of Myo-inositol transporter 3A (ITR3A) from Cryptococcus neoformans var. grubii serotype A (strain H99 / ATCC 208821 / CBS 10515 / FGSC 9487) (Filobasidiella neoformans var. grubii).